Here is a 380-residue protein sequence, read N- to C-terminus: MTDSLVLSLAKDLIARPSVTPIDEGCQKMMAEFLAPLGFEIEPMVFHDTTNLWARRGTTGPVFCFAGHTDVVPSGPAEKWHTPPFEPTIIDGMLYGRGAADMKGSIASMMAAVQRFTTDYPAHQGSIAFLITSDEEGPFINGTPKVIETLEARQEKITWCLVGEPSSTNHVGDVVKNGRRGSLTGDLTIYGIQGHVAYPHLAENPVHLAIPALNELASKQWDQGNEFFPATSFQIANINSGTGASNVIPGEMQVQFNFRYSTELTDSQIKQQVAAILDNHGLRYELKWTLSGQPFLTGSGKLVEATQNAIKAITGQETELSTSGGTSDGRFIAPTGAQVIELGPVNATIHKVNECVRVADLETLSDIYYNMMQQLLVDHD.

H68 contributes to the Zn(2+) binding site. D70 is an active-site residue. D101 contributes to the Zn(2+) binding site. E135 (proton acceptor) is an active-site residue. 3 residues coordinate Zn(2+): E136, E164, and H350.

This sequence belongs to the peptidase M20A family. DapE subfamily. In terms of assembly, homodimer. Zn(2+) is required as a cofactor. The cofactor is Co(2+).

The enzyme catalyses N-succinyl-(2S,6S)-2,6-diaminopimelate + H2O = (2S,6S)-2,6-diaminopimelate + succinate. It participates in amino-acid biosynthesis; L-lysine biosynthesis via DAP pathway; LL-2,6-diaminopimelate from (S)-tetrahydrodipicolinate (succinylase route): step 3/3. Its function is as follows. Catalyzes the hydrolysis of N-succinyl-L,L-diaminopimelic acid (SDAP), forming succinate and LL-2,6-diaminopimelate (DAP), an intermediate involved in the bacterial biosynthesis of lysine and meso-diaminopimelic acid, an essential component of bacterial cell walls. The sequence is that of Succinyl-diaminopimelate desuccinylase from Tolumonas auensis (strain DSM 9187 / NBRC 110442 / TA 4).